The following is an 84-amino-acid chain: Hepcidin (84 aa).

An N-terminal signal peptide occupies residues 1–24 (MALSSQIWAACLLLLLLLASLTSG). The propeptide occupies 25–54 (SVFPQQTGQLAELQPQDRAGARASWMPMFQ). Cystine bridges form between C66–C82, C69–C72, C70–C78, and C73–C81.

It belongs to the hepcidin family. In terms of assembly, interacts with SLC40A1; this interaction promotes SLC40A1 rapid ubiquitination. As to expression, highest expression in liver and to a lesser extent in heart and brain. Low levels in lung, tonsils, salivary gland, trachea, prostate gland, adrenal gland and thyroid gland. Secreted into the urine and blood. Expressed by hepatocytes.

It is found in the secreted. Liver-produced hormone that constitutes the main circulating regulator of iron absorption and distribution across tissues. Acts by promoting endocytosis and degradation of ferroportin/SLC40A1, leading to the retention of iron in iron-exporting cells and decreased flow of iron into plasma. Controls the major flows of iron into plasma: absorption of dietary iron in the intestine, recycling of iron by macrophages, which phagocytose old erythrocytes and other cells, and mobilization of stored iron from hepatocytes. In terms of biological role, has strong antimicrobial activity against E.coli ML35P N.cinerea and weaker against S.epidermidis, S.aureus and group b streptococcus bacteria. Active against the fungus C.albicans. No activity against P.aeruginosa. This chain is Hepcidin, found in Homo sapiens (Human).